The following is a 191-amino-acid chain: Calcium-activated potassium channel subunit beta-1 (191 aa).

Topologically, residues 1–15 are cytoplasmic; the sequence is MGKKLVMAQKRGETR. Residues 16 to 36 form a helical membrane-spanning segment; sequence ALCLGVAMVMCAVIAYYILGT. At 37 to 157 the chain is on the extracellular side; that stretch reads TMLPLYQKSV…YRRLYGPQTL (121 aa). Residues Asn80 and Asn142 are each glycosylated (N-linked (GlcNAc...) asparagine). Residues 158–178 traverse the membrane as a helical segment; sequence LFSLFWPTFLLTGGLLIIAMV. Residues 179 to 191 lie on the Cytoplasmic side of the membrane; sequence KINQSLSILAAQR.

The protein belongs to the KCNMB (TC 8.A.14.1) family. KCNMB1 subfamily. In terms of assembly, interacts with KCNMA1 tetramer. There are probably 4 molecules of KCMNB1 per KCNMA1 tetramer. N-glycosylated.

Its subcellular location is the membrane. Functionally, regulatory subunit of the calcium activated potassium KCNMA1 (maxiK) channel. Modulates the calcium sensitivity and gating kinetics of KCNMA1, thereby contributing to KCNMA1 channel diversity. Increases the apparent Ca(2+)/voltage sensitivity of the KCNMA1 channel. It also modifies KCNMA1 channel kinetics and alters its pharmacological properties. It slows down the activation and the deactivation kinetics of the channel. Acts as a negative regulator of smooth muscle contraction by enhancing the calcium sensitivity to KCNMA1. Its presence is also a requirement for internal binding of the KCNMA1 channel opener dehydrosoyasaponin I (DHS-1) triterpene glycoside and for external binding of the agonist hormone 17-beta-estradiol (E2). Increases the binding activity of charybdotoxin (CTX) toxin to KCNMA1 peptide blocker by increasing the CTX association rate and decreasing the dissociation rate. In Canis lupus familiaris (Dog), this protein is Calcium-activated potassium channel subunit beta-1 (KCNMB1).